The primary structure comprises 135 residues: Fluoride-specific ion channel FluC 1 (135 aa).

4 helical membrane passes run 7–27 (LAVG…GLVL), 32–52 (GFPY…PFLM), 65–85 (LALA…SFSV), and 96–116 (WSAF…LSLL). Na(+)-binding residues include glycine 75 and threonine 78.

Belongs to the fluoride channel Fluc/FEX (TC 1.A.43) family.

It is found in the cell membrane. The catalysed reaction is fluoride(in) = fluoride(out). Na(+) is not transported, but it plays an essential structural role and its presence is essential for fluoride channel function. Fluoride-specific ion channel. Important for reducing fluoride concentration in the cell, thus reducing its toxicity. The sequence is that of Fluoride-specific ion channel FluC 1 from Latilactobacillus sakei subsp. sakei (strain 23K) (Lactobacillus sakei subsp. sakei).